The following is a 344-amino-acid chain: 4-hydroxy-2-oxovalerate aldolase (344 aa).

The region spanning 8–260 (VTLHDMSLRD…NHGIDLYKIM (253 aa)) is the Pyruvate carboxyltransferase domain. 16 to 17 (RD) lines the substrate pocket. Asp17 provides a ligand contact to Mn(2+). The Proton acceptor role is filled by His20. 2 residues coordinate substrate: Ser170 and His199. His199 and His201 together coordinate Mn(2+). Tyr290 lines the substrate pocket.

It belongs to the 4-hydroxy-2-oxovalerate aldolase family.

The catalysed reaction is (S)-4-hydroxy-2-oxopentanoate = acetaldehyde + pyruvate. This is 4-hydroxy-2-oxovalerate aldolase (mhpE) from Pseudoalteromonas translucida (strain TAC 125).